The sequence spans 832 residues: MSAADKVKPAASPASEDPSAIAGNISYHAQYSPHFSPLAFGPEQAFYATAESVRDHLLQRWNDTYLHFHKTDPKQTYYLSMEYLQGRALTNAVGNLAITGAYADALKKFGYELEAIAGQERDAALGNGGLGRLASCFLDSMATLNLPSWGYGLRYRYGLFKQRIAKEGQEEIAEDWLDKFSPWEIVRHDVVYPIRFFGHVEISPDGKRKWAGGEVLNALAYDVPIPGYKTKNAISLRLWDATATAEDFNLFQFNDGQYESAAQLHSRAQQICAVLYPGDATEEGKLLRLKQQYFLCSASLQDIIFRFKERKADRVSGKWSEFPSKVAVQMNDTHPTLAIPELMRLLMDVEGLGWDEAWAVTNKTVAYTNHTVLPEALEKWSQAVMKKLLPRHMEIIEEIDKRFREMVISTRKDMEGKIESMRVLDNNPEKPVVRMANLCVVAGHTVNGVAELHSNILKQELFADYVSIWPNKFQNKTNGITPRRWLRFCNPELSEIVTKWLKTDQWTSNLDLLTGLRKFADDEKLHAEWAAAKLASKKRLAKHVLDVTGVTIDPDSLFDIQIKRIHEYKRQLMNILGAVYRYKKLKEMSAADRQKVTPRTVMVGGKAFATYTNAKRIVKLVNDVGAVVNNDADVNKYLKVVFIPNYNVSVAEVLIPGSELSQHISTAGMEASGTSNMKFSLNGCVIIGTLDGANVEIREEVGQDNFFLFGAKADQVAGLRKDRENGLFKPDPRFEEAKQFIRSGAFGTYDYTPLLDSLEGNTGFGRGDYFLVGYDFPSYIDAQARVDEAYKDKKKWVKMSILNTAGSGKFSSDRTIDQYAKEIWGISACPVP.

An N6-(pyridoxal phosphate)lysine modification is found at K678.

It belongs to the glycogen phosphorylase family. The cofactor is pyridoxal 5'-phosphate.

It localises to the cytoplasm. It catalyses the reaction [(1-&gt;4)-alpha-D-glucosyl](n) + phosphate = [(1-&gt;4)-alpha-D-glucosyl](n-1) + alpha-D-glucose 1-phosphate. Functionally, phosphorylase is an important allosteric enzyme in carbohydrate metabolism. Enzymes from different sources differ in their regulatory mechanisms and in their natural substrates. However, all known phosphorylases share catalytic and structural properties. The protein is Alpha-glucan phosphorylase, H isozyme of Triticum aestivum (Wheat).